The primary structure comprises 444 residues: UDP-N-acetylmuramate--L-alanine ligase (444 aa).

110–116 (GAHGKTS) lines the ATP pocket.

It belongs to the MurCDEF family. In terms of processing, phosphorylated by StkP in vitro. Dephosphorylated by PhpP in vitro.

It is found in the cytoplasm. It carries out the reaction UDP-N-acetyl-alpha-D-muramate + L-alanine + ATP = UDP-N-acetyl-alpha-D-muramoyl-L-alanine + ADP + phosphate + H(+). The protein operates within cell wall biogenesis; peptidoglycan biosynthesis. Its function is as follows. Cell wall formation. This Streptococcus pneumoniae serotype 4 (strain ATCC BAA-334 / TIGR4) protein is UDP-N-acetylmuramate--L-alanine ligase.